The sequence spans 287 residues: Protease HtpX (287 aa).

The next 2 helical transmembrane spans lie at 4 to 24 (IFLL…VMSI) and 33 to 53 (GGLL…SLAI). Residue His139 participates in Zn(2+) binding. Glu140 is a catalytic residue. Zn(2+) is bound at residue His143. Transmembrane regions (helical) follow at residues 154–174 (LIQG…ASII) and 195–215 (AVVF…VAYF). Glu220 provides a ligand contact to Zn(2+).

This sequence belongs to the peptidase M48B family. The cofactor is Zn(2+).

The protein localises to the cell inner membrane. This Shewanella loihica (strain ATCC BAA-1088 / PV-4) protein is Protease HtpX.